The chain runs to 285 residues: Glutamate racemase (285 aa).

Residues 30 to 31 and 62 to 63 contribute to the substrate site; these read DS and YG. The active-site Proton donor/acceptor is Cys94. Residue 95 to 96 participates in substrate binding; that stretch reads NT. The Proton donor/acceptor role is filled by Cys206. 207–208 serves as a coordination point for substrate; sequence TH.

It belongs to the aspartate/glutamate racemases family.

The catalysed reaction is L-glutamate = D-glutamate. It functions in the pathway cell wall biogenesis; peptidoglycan biosynthesis. In terms of biological role, provides the (R)-glutamate required for cell wall biosynthesis. In Pectobacterium carotovorum subsp. carotovorum (strain PC1), this protein is Glutamate racemase.